A 325-amino-acid chain; its full sequence is UPF0285 protein MmarC6_0247 (325 aa).

It belongs to the UPF0285 family.

The chain is UPF0285 protein MmarC6_0247 from Methanococcus maripaludis (strain C6 / ATCC BAA-1332).